We begin with the raw amino-acid sequence, 610 residues long: UvrABC system protein C (610 aa).

The 79-residue stretch at 16-94 (SQPGVYSMYD…IKLYQPRYNV (79 aa)) folds into the GIY-YIG domain. The region spanning 204–239 (QQVLNQLVERMELASRALNFEDAAHARDQIQAVRRV) is the UVR domain.

Belongs to the UvrC family. Interacts with UvrB in an incision complex.

The protein localises to the cytoplasm. In terms of biological role, the UvrABC repair system catalyzes the recognition and processing of DNA lesions. UvrC both incises the 5' and 3' sides of the lesion. The N-terminal half is responsible for the 3' incision and the C-terminal half is responsible for the 5' incision. The sequence is that of UvrABC system protein C from Sodalis glossinidius (strain morsitans).